The primary structure comprises 124 residues: Acidic phospholipase A2 BA2 (124 aa).

Disulfide bonds link Cys26–Cys116, Cys28–Cys44, Cys43–Cys95, Cys49–Cys124, Cys50–Cys88, Cys57–Cys81, and Cys75–Cys86. Residues Tyr27, Gly29, and Gly31 each coordinate Ca(2+). Residue His47 is part of the active site. Asp48 provides a ligand contact to Ca(2+). Asp89 is a catalytic residue.

It belongs to the phospholipase A2 family. Group II subfamily. D49 sub-subfamily. Requires Ca(2+) as cofactor. Expressed by the venom gland.

The protein localises to the secreted. It carries out the reaction a 1,2-diacyl-sn-glycero-3-phosphocholine + H2O = a 1-acyl-sn-glycero-3-phosphocholine + a fatty acid + H(+). In terms of biological role, PLA2 catalyzes the calcium-dependent hydrolysis of the 2-acyl groups in 3-sn-phosphoglycerides. The sequence is that of Acidic phospholipase A2 BA2 from Gloydius halys (Chinese water mocassin).